Here is a 241-residue protein sequence, read N- to C-terminus: Sugar fermentation stimulation protein homolog (241 aa).

The protein belongs to the SfsA family.

The sequence is that of Sugar fermentation stimulation protein homolog from Nostoc punctiforme (strain ATCC 29133 / PCC 73102).